A 163-amino-acid polypeptide reads, in one-letter code: Shikimate kinase (163 aa).

ATP is bound at residue 10–15 (GVGKTT). Thr14 lines the Mg(2+) pocket. 3 residues coordinate substrate: Asp28, Arg52, and Gly75. Arg116 contributes to the ATP binding site. Arg134 is a binding site for substrate. Arg151 provides a ligand contact to ATP.

It belongs to the shikimate kinase family. As to quaternary structure, monomer. Mg(2+) is required as a cofactor.

It localises to the cytoplasm. The catalysed reaction is shikimate + ATP = 3-phosphoshikimate + ADP + H(+). It functions in the pathway metabolic intermediate biosynthesis; chorismate biosynthesis; chorismate from D-erythrose 4-phosphate and phosphoenolpyruvate: step 5/7. Catalyzes the specific phosphorylation of the 3-hydroxyl group of shikimic acid using ATP as a cosubstrate. The polypeptide is Shikimate kinase (Streptococcus pyogenes serotype M4 (strain MGAS10750)).